The sequence spans 107 residues: Translation initiation factor IF-1, chloroplastic (107 aa).

In terms of domain architecture, S1-like spans 8 to 83 (REKKNPREAK…SKGRIIYRLP (76 aa)). A disordered region spans residues 81 to 107 (RLPHKDSKRTEDSKDTEDLKDTKDSKD). Basic and acidic residues predominate over residues 83–107 (PHKDSKRTEDSKDTEDLKDTKDSKD).

It belongs to the IF-1 family. In terms of assembly, component of the 30S ribosomal translation pre-initiation complex which assembles on the 30S ribosome in the order IF-2 and IF-3, IF-1 and N-formylmethionyl-tRNA(fMet); mRNA recruitment can occur at any time during PIC assembly.

Its subcellular location is the plastid. It localises to the chloroplast. Its function is as follows. One of the essential components for the initiation of protein synthesis. Stabilizes the binding of IF-2 and IF-3 on the 30S subunit to which N-formylmethionyl-tRNA(fMet) subsequently binds. Helps modulate mRNA selection, yielding the 30S pre-initiation complex (PIC). Upon addition of the 50S ribosomal subunit IF-1, IF-2 and IF-3 are released leaving the mature 70S translation initiation complex. The polypeptide is Translation initiation factor IF-1, chloroplastic (Saccharum hybrid (Sugarcane)).